Reading from the N-terminus, the 801-residue chain is Potassium transporter 1 (801 aa).

The interval 1–20 is disordered; that stretch reads MSSALEVEGSGSPGVEPAAT. The Cytoplasmic segment spans residues 1-57; the sequence is MSSALEVEGSGSPGVEPAATATASRLKRHDSLFGDAEKVSGGKHHGGSAVSWAVTLH. Residues 58-80 traverse the membrane as a helical segment; sequence LAFQSVGIIYGDIGTSPLYVYSS. Topologically, residues 81 to 94 are extracellular; the sequence is TFPDGIGHRDDLVG. The helical transmembrane segment at 95–115 threads the bilayer; it reads VLSLILYTLIIIPMLKYVFIV. The Cytoplasmic segment spans residues 116-181; sequence LYANDNGDGG…HKLESSRAAK (66 aa). Residues 182 to 202 traverse the membrane as a helical segment; it reads MALFFLTILGTSMVMGDGTLT. Topologically, residues 203 to 219 are extracellular; it reads PAISVLSAVSGIREKAP. The chain crosses the membrane as a helical span at residues 220-240; the sequence is NLTQTQVVLISVAILFMLFSV. The Cytoplasmic portion of the chain corresponds to 241–247; it reads QRFGTDK. A helical transmembrane segment spans residues 248–268; it reads VGYTFAPIISVWFLLIAGIGL. The Extracellular segment spans residues 269-298; it reads YNLVVHEITILKAFNPWYIVQYFRRNGKKG. The chain crosses the membrane as a helical span at residues 299–319; sequence WVSLGGVVLCVTGTEGMFADL. The Cytoplasmic portion of the chain corresponds to 320-328; that stretch reads GHFNIRAVQ. The chain crosses the membrane as a helical span at residues 329 to 349; it reads ISFNCILFPSVALCYIGQAAY. Topologically, residues 350–375 are extracellular; it reads LRKFPENVSDTFYKSIPGKYRDRLNF. A helical transmembrane segment spans residues 376–398; it reads GPLFWPTFIVAILAAIIASQAML. Residues 399–429 are Cytoplasmic-facing; that stretch reads SGAFAILSKALSLGCLPRVRVIHTSKKYEGQ. The chain crosses the membrane as a helical span at residues 430-450; that stretch reads VYIPEVNFMMGLASIIVTIAF. Over 451–461 the chain is Extracellular; sequence RTTTSIGNAYG. Residues 462–482 form a helical membrane-spanning segment; it reads ICVVTTFMVTTHLMTVVMLLI. Residues 483–487 lie on the Cytoplasmic side of the membrane; that stretch reads WKKHL. A helical transmembrane segment spans residues 488 to 508; it reads VFILLFYCVFGFTEVVYLSSI. Over 509-511 the chain is Extracellular; it reads LSK. The helical transmembrane segment at 512 to 532 threads the bilayer; that stretch reads FVDGGYLPFCFAMVLMTMMAT. Residues 533–801 lie on the Cytoplasmic side of the membrane; that stretch reads WHYVHVRRYW…LLKVGITYEI (269 aa). Residues 679 to 728 form a disordered region; it reads DDDDEAAARPRRSTSSAVHSEEAIQAASSGRTTASSVQLQAGGEPPAAMD. Polar residues predominate over residues 704–717; the sequence is AASSGRTTASSVQL.

This sequence belongs to the HAK/KUP transporter (TC 2.A.72.3) family. In terms of tissue distribution, expressed almost exclusively in roots.

The protein resides in the cell membrane. Functionally, high-affinity potassium transporter. Also transports rubidium, with the same affinity and cesium, with a lower affinity. The sequence is that of Potassium transporter 1 (HAK1) from Oryza sativa subsp. japonica (Rice).